Here is a 178-residue protein sequence, read N- to C-terminus: Ribosome maturation factor RimP (178 aa).

This sequence belongs to the RimP family.

Its subcellular location is the cytoplasm. Its function is as follows. Required for maturation of 30S ribosomal subunits. The chain is Ribosome maturation factor RimP from Streptococcus pyogenes serotype M18 (strain MGAS8232).